A 20-amino-acid chain; its full sequence is Cathepsin L1 (20 aa).

Positions 1-10 (AVPDKIDPRE) are enriched in basic and acidic residues. The segment at 1-20 (AVPDKIDPRESGYVTGVKDQ) is disordered.

Belongs to the peptidase C1 family. As to quaternary structure, dimer of a heavy and a light chain linked by disulfide bonds.

It localises to the lysosome. The enzyme catalyses Specificity close to that of papain. As compared to cathepsin B, cathepsin L exhibits higher activity toward protein substrates, but has little activity on Z-Arg-Arg-NHMec, and no peptidyl-dipeptidase activity.. In terms of biological role, thiol protease that assists the parasite in burrowing through the gut wall and liver of its mammalian host. The protein is Cathepsin L1 of Fasciola hepatica (Liver fluke).